Reading from the N-terminus, the 294-residue chain is Elongation factor Ts (294 aa).

The interval 81–84 is involved in Mg(2+) ion dislocation from EF-Tu; that stretch reads TDFV.

It belongs to the EF-Ts family.

It localises to the cytoplasm. In terms of biological role, associates with the EF-Tu.GDP complex and induces the exchange of GDP to GTP. It remains bound to the aminoacyl-tRNA.EF-Tu.GTP complex up to the GTP hydrolysis stage on the ribosome. The protein is Elongation factor Ts of Lawsonia intracellularis (strain PHE/MN1-00).